The sequence spans 398 residues: Calreticulin (398 aa).

The first 19 residues, 1-19 (MKAVVLVVVSLLALSSINC), serve as a signal peptide directing secretion. The segment at 20 to 197 (DVFFEEKFPD…NEKVESGDLE (178 aa)) is N-domain. Cys-105 and Cys-137 are oxidised to a cystine. 4 residues coordinate an alpha-D-glucoside: Tyr-109, Lys-111, Tyr-128, and Asp-135. 7 consecutive repeat copies span residues 191–202 (VESGDLEADWDF), 210–221 (DPEAKKPEDWDD), 227–238 (DPEDKKPEDWDK), 244–255 (DPDATKPEDWDD), 259–269 (GEWEPPMIDNP), 273–283 (GVWAPKQIDNP), and 287–297 (GPWVHPEIDNP). The 4 X approximate repeats stretch occupies residues 191 to 255 (VESGDLEADW…DATKPEDWDD (65 aa)). Residues 198-308 (ADWDFLPNKK…YTPDSNLYKR (111 aa)) form a P-domain region. Over residues 207–251 (KIKDPEAKKPEDWDDKPTIPDPEDKKPEDWDKPEHIPDPDATKPE) the composition is skewed to basic and acidic residues. Residues 207–257 (KIKDPEAKKPEDWDDKPTIPDPEDKKPEDWDKPEHIPDPDATKPEDWDDEM) are disordered. Residues 259-297 (GEWEPPMIDNPDYKGVWAPKQIDNPAYKGPWVHPEIDNP) form a 3 X approximate repeats region. A C-domain region spans residues 309–398 (DEICAVGLDL…AAPVEEHDEL (90 aa)). An an alpha-D-glucoside-binding site is contributed by Asp-317. The interval 334–398 (DDPAAAKERG…AAPVEEHDEL (65 aa)) is disordered. Basic and acidic residues predominate over residues 337-372 (AAAKERGEVIKKRQEGEKKMKSEQDEAEREKEKAEK). Residues 373 to 387 (PDDEEDDEDLDDETG) are compositionally biased toward acidic residues. The Prevents secretion from ER signature appears at 395-398 (HDEL).

Belongs to the calreticulin family. Monomer. In terms of tissue distribution, expressed in fat bodies. Not expressed in midgut, silk gland, ovary or testis.

The protein resides in the endoplasmic reticulum lumen. In terms of biological role, molecular calcium-binding chaperone promoting folding, oligomeric assembly and quality control in the ER via the calreticulin/calnexin cycle. This lectin may interact transiently with almost all of the monoglucosylated glycoproteins that are synthesized in the ER. This chain is Calreticulin, found in Bombyx mori (Silk moth).